Here is a 571-residue protein sequence, read N- to C-terminus: Urease subunit alpha (571 aa).

The Urease domain occupies 133–571 (AGIDTHIHFI…VALNQRYFFS (439 aa)). His-138, His-140, and Lys-221 together coordinate Ni(2+). An N6-carboxylysine modification is found at Lys-221. His-223 is a binding site for substrate. 2 residues coordinate Ni(2+): His-250 and His-276. The active-site Proton donor is His-324. Position 364 (Asp-364) interacts with Ni(2+).

This sequence belongs to the metallo-dependent hydrolases superfamily. Urease alpha subunit family. Heterotrimer of UreA (gamma), UreB (beta) and UreC (alpha) subunits. Three heterotrimers associate to form the active enzyme. It depends on Ni cation as a cofactor. Carboxylation allows a single lysine to coordinate two nickel ions.

It localises to the cytoplasm. The catalysed reaction is urea + 2 H2O + H(+) = hydrogencarbonate + 2 NH4(+). It participates in nitrogen metabolism; urea degradation; CO(2) and NH(3) from urea (urease route): step 1/1. The chain is Urease subunit alpha from Photorhabdus laumondii subsp. laumondii (strain DSM 15139 / CIP 105565 / TT01) (Photorhabdus luminescens subsp. laumondii).